The sequence spans 20 residues: Antiviral protein Y3 (20 aa).

The protein is Antiviral protein Y3 of Pleurotus citrinopileatus (Golden oyster mushroom).